The following is a 234-amino-acid chain: Transcription factor bHLH160 (234 aa).

A compositionally biased stretch (polar residues) spans 1 to 13 (MSSQPNHQTSISS). The tract at residues 1 to 67 (MSSQPNHQTS…GAAKKQDHNA (67 aa)) is disordered. Basic and acidic residues predominate over residues 27–37 (IVEKESAEKDT). The bHLH domain occupies 60-115 (AKKQDHNAKERLRRMRLHASYLTLGTLLPDHSSSSSKKKWSAPSIIDNVITYIPKL).

This sequence belongs to the bHLH protein family.

It localises to the nucleus. In Arabidopsis thaliana (Mouse-ear cress), this protein is Transcription factor bHLH160.